The sequence spans 179 residues: Negative modulator of initiation of replication (179 aa).

The protein belongs to the SeqA family. In terms of assembly, homodimer. Polymerizes to form helical filaments.

It localises to the cytoplasm. Its function is as follows. Negative regulator of replication initiation, which contributes to regulation of DNA replication and ensures that replication initiation occurs exactly once per chromosome per cell cycle. Binds to pairs of hemimethylated GATC sequences in the oriC region, thus preventing assembly of replication proteins and re-initiation at newly replicated origins. Repression is relieved when the region becomes fully methylated. The sequence is that of Negative modulator of initiation of replication from Vibrio atlanticus (strain LGP32) (Vibrio splendidus (strain Mel32)).